Reading from the N-terminus, the 688-residue chain is Probable glucan endo-1,3-beta-glucosidase btgC (688 aa).

Disordered stretches follow at residues 1–49 (MSGP…MNGQ), 61–91 (DGRQGWGRSPEPSPSLLTGSSATPGMDNLGP), and 169–194 (QLTPGQSVSHLSSTNPSQRNLYDIPY). The Cytoplasmic segment spans residues 1 to 307 (MSGPNRTYSF…PKPGGGNKKR (307 aa)). Polar residues predominate over residues 175-188 (SVSHLSSTNPSQRN). A helical; Signal-anchor for type II membrane protein transmembrane segment spans residues 308-328 (GWIVGAILAFIIIGAIVGGAV). Topologically, residues 329–688 (GGTIGHRGNE…IPDCGGKTAT (360 aa)) are extracellular. The disordered stretch occupies residues 334–363 (HRGNEEPSSASSASSSSTQTATEDTSVNGD). Positions 341-355 (SSASSASSSSTQTAT) are enriched in low complexity. 3 N-linked (GlcNAc...) asparagine glycosylation sites follow: N408, N431, and N459. E491 acts as the Proton donor in catalysis. E590 functions as the Nucleophile in the catalytic mechanism. N-linked (GlcNAc...) asparagine glycosylation is found at N609 and N635.

Belongs to the glycosyl hydrolase 17 family.

The protein resides in the cell membrane. It catalyses the reaction Hydrolysis of (1-&gt;3)-beta-D-glucosidic linkages in (1-&gt;3)-beta-D-glucans.. Glucanases play a role in cell expansion during growth, in cell-cell fusion during mating, and in spore release during sporulation. This enzyme may be involved in beta-glucan degradation. Active on laminarin and lichenan. This is Probable glucan endo-1,3-beta-glucosidase btgC (btgC) from Aspergillus fumigatus (strain CBS 144.89 / FGSC A1163 / CEA10) (Neosartorya fumigata).